We begin with the raw amino-acid sequence, 117 residues long: Large ribosomal subunit protein uL18 (117 aa).

This sequence belongs to the universal ribosomal protein uL18 family. Part of the 50S ribosomal subunit; part of the 5S rRNA/L5/L18/L25 subcomplex. Contacts the 5S and 23S rRNAs.

Functionally, this is one of the proteins that bind and probably mediate the attachment of the 5S RNA into the large ribosomal subunit, where it forms part of the central protuberance. This Coxiella burnetii (strain CbuK_Q154) (Coxiella burnetii (strain Q154)) protein is Large ribosomal subunit protein uL18.